The primary structure comprises 432 residues: Tryptophan--tRNA ligase (432 aa).

Residues 13 to 15 (TTS) and 21 to 22 (GN) contribute to the ATP site. Residues 14–22 (TSGTPHLGN) carry the 'HIGH' region motif. Aspartate 146 serves as a coordination point for L-tryptophan. ATP contacts are provided by residues 158–160 (GRD), leucine 198, and 205–209 (KMSKS). A 'KMSKS' region motif is present at residues 205–209 (KMSKS).

This sequence belongs to the class-I aminoacyl-tRNA synthetase family. In terms of assembly, homodimer.

The protein localises to the cytoplasm. The catalysed reaction is tRNA(Trp) + L-tryptophan + ATP = L-tryptophyl-tRNA(Trp) + AMP + diphosphate + H(+). In terms of biological role, catalyzes the attachment of tryptophan to tRNA(Trp). In Xanthomonas axonopodis pv. citri (strain 306), this protein is Tryptophan--tRNA ligase.